The following is a 214-amino-acid chain: Ras-related protein Rab-17 (214 aa).

A Phosphoserine modification is found at Ser29. Positions 31, 32, 33, and 50 each coordinate GTP. Thr33, Thr50, and Asp73 together coordinate Mg(2+). A Switch 1 motif is present at residues 43 to 54 (DFSNVLPTVGCA). The short motif at 75–91 (AGQEKYQSVCHLYFRGA) is the Switch 2 element. The GTP site is built by Gly76, Asn132, Lys133, Asp135, and Ala163. The tract at residues 183-204 (RAGDTGSSRPQEGEAVALNQEP) is disordered. 2 S-geranylgeranyl cysteine lipidation sites follow: Cys211 and Cys212.

Belongs to the small GTPase superfamily. Rab family. It depends on Mg(2+) as a cofactor. In terms of tissue distribution, expressed in kidney, liver, and intestine mainly by epithelial cells. Expressed in hippocampus (at protein level).

It is found in the recycling endosome membrane. Its subcellular location is the melanosome. The protein localises to the cell projection. It localises to the dendrite. The enzyme catalyses GTP + H2O = GDP + phosphate + H(+). Regulated by guanine nucleotide exchange factors (GEFs) which promote the exchange of bound GDP for free GTP. Regulated by GTPase activating proteins (GAPs) which increase the GTP hydrolysis activity. Inhibited by GDP dissociation inhibitors (GDIs). The small GTPases Rab are key regulators of intracellular membrane trafficking, from the formation of transport vesicles to their fusion with membranes. Rabs cycle between an inactive GDP-bound form and an active GTP-bound form that is able to recruit to membranes different set of downstream effectors directly responsible for vesicle formation, movement, tethering and fusion. RAB17 is involved in transcytosis, the directed movement of endocytosed material through the cell and its exocytosis from the plasma membrane at the opposite side. Mainly observed in epithelial cells, transcytosis mediates, for instance, the transcellular transport of immunoglobulins from the basolateral surface to the apical surface. Most probably controls membrane trafficking through apical recycling endosomes in a post-endocytic step of transcytosis. Required for melanosome transport and release from melanocytes, it also regulates dendrite and dendritic spine development. May also play a role in cell migration. This is Ras-related protein Rab-17 from Mus musculus (Mouse).